The chain runs to 769 residues: Metal transporter CNNM4 (769 aa).

At 1-175 (MAASAGCYYG…RLRVLEEEKP (175 aa)) the chain is on the extracellular side. Residues asparagine 99 and asparagine 115 are each glycosylated (N-linked (GlcNAc...) asparagine). One can recognise a CNNM transmembrane domain in the interval 175-355 (PLLPIWLQAC…EPYSGIVREE (181 aa)). A helical membrane pass occupies residues 176 to 196 (LLPIWLQACIIAVLLTLSGIF). Topologically, residues 197–237 (SGLNLGLMALDPMELRVVQRCGTEKEKRYASKIEPVRRKGN) are cytoplasmic. An intramembrane region (helical) is located at residues 238 to 258 (YLLCSLLLGNVLVNTTLTALL). Residues 259 to 261 (DEL) are Cytoplasmic-facing. The helical transmembrane segment at 262-282 (IGSGLAAVLASTTGIVVLGEI) threads the bilayer. Over 283–292 (VPQALCSRHG) the chain is Extracellular. A helical transmembrane segment spans residues 293–313 (LAVGANTLWLTRIFMLLTFPV). The Cytoplasmic portion of the chain corresponds to 314–769 (AYPVSRLLDC…SQHSLQHNAV (456 aa)). 2 CBS domains span residues 374 to 435 (MTKV…CTPL) and 442 to 508 (YSHP…ILDE). The interval 717–769 (LMSSRLDSSPQSPEGGTRKPDSTLSERSEVLEDETTSLLNQRNSQHSLQHNAV) is disordered. The span at 721–730 (RLDSSPQSPE) shows a compositional bias: polar residues. Residues 732–746 (GTRKPDSTLSERSEV) are compositionally biased toward basic and acidic residues. Residues 752 to 769 (TSLLNQRNSQHSLQHNAV) show a composition bias toward polar residues.

This sequence belongs to the ACDP family.

It localises to the cell membrane. Functionally, probable metal transporter. The polypeptide is Metal transporter CNNM4 (cnnm4) (Xenopus tropicalis (Western clawed frog)).